We begin with the raw amino-acid sequence, 405 residues long: Deoxyguanosinetriphosphate triphosphohydrolase-like protein (405 aa).

The HD domain occupies 75–219 (RLTHTIEVAQ…AAIADDIAYN (145 aa)).

Belongs to the dGTPase family. Type 2 subfamily.

The polypeptide is Deoxyguanosinetriphosphate triphosphohydrolase-like protein (Rhizobium johnstonii (strain DSM 114642 / LMG 32736 / 3841) (Rhizobium leguminosarum bv. viciae)).